A 338-amino-acid chain; its full sequence is Fructose-1,6-bisphosphatase class 1 (338 aa).

Glutamate 94, aspartate 116, leucine 118, and aspartate 119 together coordinate Mg(2+). Substrate contacts are provided by residues 119 to 122, asparagine 210, and lysine 276; that span reads DGSS. Glutamate 282 provides a ligand contact to Mg(2+).

This sequence belongs to the FBPase class 1 family. Homotetramer. The cofactor is Mg(2+).

Its subcellular location is the cytoplasm. It catalyses the reaction beta-D-fructose 1,6-bisphosphate + H2O = beta-D-fructose 6-phosphate + phosphate. It participates in carbohydrate biosynthesis; gluconeogenesis. This chain is Fructose-1,6-bisphosphatase class 1, found in Burkholderia mallei (strain NCTC 10247).